The sequence spans 987 residues: Leucine--tRNA ligase (987 aa).

Positions 69–80 (PYPSGKGLHVGH) match the 'HIGH' region motif. The 'KMSKS' region signature appears at 760-764 (KMGKS). Residue Lys-763 participates in ATP binding.

Belongs to the class-I aminoacyl-tRNA synthetase family.

The protein localises to the cytoplasm. It catalyses the reaction tRNA(Leu) + L-leucine + ATP = L-leucyl-tRNA(Leu) + AMP + diphosphate. The protein is Leucine--tRNA ligase of Bifidobacterium longum (strain NCC 2705).